Consider the following 56-residue polypeptide: Meucin-25 (56 aa).

The signal sequence occupies residues 1–31 (MFRIEYSLVQLLLRNVTIPLLLIIQMHIMSS).

The protein belongs to the non-disulfide-bridged peptide (NDBP) superfamily. Antimalarial peptide (group 5) family. In terms of tissue distribution, expressed by the venom gland.

It is found in the secreted. Its function is as follows. This synthetic cationic peptide inhibits the development of Plasmodium berghei ookinetes, kills intraerythrocytic P.falciparum, and is cytotoxic to the Drosophila S2 cell at micromolar concentrations. No antibacterial, antifungal and hemolytic activities have been found at micromolar concentrations. The polypeptide is Meucin-25 (Mesobuthus eupeus (Lesser Asian scorpion)).